The sequence spans 484 residues: Diaminopimelate decarboxylase 1, chloroplastic (484 aa).

The segment covering 1–28 (MAAATQFLSQPSSLNPHQLKNQTSQRSR) has biased composition (polar residues). A disordered region spans residues 1–30 (MAAATQFLSQPSSLNPHQLKNQTSQRSRSI). The transit peptide at 1–49 (MAAATQFLSQPSSLNPHQLKNQTSQRSRSIPVLSLKSTLKPLKRLSVKA) directs the protein to the chloroplast. A50 is subject to N-acetylalanine. N6-(pyridoxal phosphate)lysine is present on K125. Pyridoxal 5'-phosphate contacts are provided by residues G304 and 340–343 (EPGR). R343, R379, and Y383 together coordinate substrate. C411 functions as the Proton donor in the catalytic mechanism. Residues E412 and Y440 each coordinate substrate. Residue Y440 coordinates pyridoxal 5'-phosphate.

Belongs to the Orn/Lys/Arg decarboxylase class-II family. LysA subfamily. As to quaternary structure, homodimer. Requires pyridoxal 5'-phosphate as cofactor.

It is found in the plastid. Its subcellular location is the chloroplast. It carries out the reaction meso-2,6-diaminopimelate + H(+) = L-lysine + CO2. It functions in the pathway amino-acid biosynthesis; L-lysine biosynthesis via DAP pathway; L-lysine from DL-2,6-diaminopimelate: step 1/1. Functionally, specifically catalyzes the decarboxylation of meso-diaminopimelate (meso-DAP) to L-lysine. This Arabidopsis thaliana (Mouse-ear cress) protein is Diaminopimelate decarboxylase 1, chloroplastic (LYSA1).